Here is a 254-residue protein sequence, read N- to C-terminus: uncharacterized protein (254 aa).

The 68-residue stretch at 14–81 (IRLQKVLSQA…DSLVYLALNK (68 aa)) folds into the S4 RNA-binding domain. The active-site Nucleophile is aspartate 119.

Belongs to the pseudouridine synthase RsuA family.

It catalyses the reaction a uridine in RNA = a pseudouridine in RNA. This is an uncharacterized protein from Mycobacterium bovis (strain ATCC BAA-935 / AF2122/97).